The primary structure comprises 327 residues: GTPase Obg (327 aa).

The Obg domain maps to 2–160 (HILKDSLSIT…LNLRLELSLI (159 aa)). Positions 161-326 (ADIGLVGFPN…LVSELFALSR (166 aa)) constitute an OBG-type G domain. GTP-binding positions include 167-174 (GFPNAGKS), 192-196 (FTTRF), 213-216 (DVPG), 280-283 (NKLD), and 307-309 (SIY). 2 residues coordinate Mg(2+): Ser-174 and Thr-194.

This sequence belongs to the TRAFAC class OBG-HflX-like GTPase superfamily. OBG GTPase family. Monomer. The cofactor is Mg(2+).

It localises to the cytoplasm. Its function is as follows. An essential GTPase which binds GTP, GDP and possibly (p)ppGpp with moderate affinity, with high nucleotide exchange rates and a fairly low GTP hydrolysis rate. Plays a role in control of the cell cycle, stress response, ribosome biogenesis and in those bacteria that undergo differentiation, in morphogenesis control. In Borrelia hermsii (strain HS1 / DAH), this protein is GTPase Obg.